The sequence spans 160 residues: 6,7-dimethyl-8-ribityllumazine synthase (160 aa).

5-amino-6-(D-ribitylamino)uracil is bound by residues Phe22, 57–59 (TYE), and 81–83 (TII). (2S)-2-hydroxy-3-oxobutyl phosphate is bound at residue 86–87 (QT). The active-site Proton donor is the His89. Leu114 contributes to the 5-amino-6-(D-ribitylamino)uracil binding site. Arg128 serves as a coordination point for (2S)-2-hydroxy-3-oxobutyl phosphate.

Belongs to the DMRL synthase family. In terms of assembly, forms an icosahedral capsid composed of 60 subunits, arranged as a dodecamer of pentamers.

The catalysed reaction is (2S)-2-hydroxy-3-oxobutyl phosphate + 5-amino-6-(D-ribitylamino)uracil = 6,7-dimethyl-8-(1-D-ribityl)lumazine + phosphate + 2 H2O + H(+). It participates in cofactor biosynthesis; riboflavin biosynthesis; riboflavin from 2-hydroxy-3-oxobutyl phosphate and 5-amino-6-(D-ribitylamino)uracil: step 1/2. Its function is as follows. Catalyzes the formation of 6,7-dimethyl-8-ribityllumazine by condensation of 5-amino-6-(D-ribitylamino)uracil with 3,4-dihydroxy-2-butanone 4-phosphate. This is the penultimate step in the biosynthesis of riboflavin. This chain is 6,7-dimethyl-8-ribityllumazine synthase, found in Buchnera aphidicola subsp. Acyrthosiphon pisum (strain Tuc7).